A 210-amino-acid polypeptide reads, in one-letter code: Cytochrome c biogenesis ATP-binding export protein CcmA (210 aa).

Residues 1–208 (MHLNQLVISH…KVRTLSLDQF (208 aa)) enclose the ABC transporter domain. Position 38-45 (38-45 (GHNGIGKT)) interacts with ATP.

Belongs to the ABC transporter superfamily. CcmA exporter (TC 3.A.1.107) family. As to quaternary structure, the complex is composed of two ATP-binding proteins (CcmA) and two transmembrane proteins (CcmB).

Its subcellular location is the cell inner membrane. The catalysed reaction is heme b(in) + ATP + H2O = heme b(out) + ADP + phosphate + H(+). In terms of biological role, part of the ABC transporter complex CcmAB involved in the biogenesis of c-type cytochromes; once thought to export heme, this seems not to be the case, but its exact role is uncertain. Responsible for energy coupling to the transport system. The polypeptide is Cytochrome c biogenesis ATP-binding export protein CcmA (Haemophilus ducreyi (strain 35000HP / ATCC 700724)).